Reading from the N-terminus, the 185-residue chain is dCTP deaminase (185 aa).

DCTP is bound by residues 107–112 (KSTYAR), 131–133 (TLE), Gln-152, Tyr-166, and Gln-176. The Proton donor/acceptor role is filled by Glu-133.

This sequence belongs to the dCTP deaminase family. In terms of assembly, homotrimer.

The enzyme catalyses dCTP + H2O + H(+) = dUTP + NH4(+). The protein operates within pyrimidine metabolism; dUMP biosynthesis; dUMP from dCTP (dUTP route): step 1/2. Its function is as follows. Catalyzes the deamination of dCTP to dUTP. In Anaplasma marginale (strain Florida), this protein is dCTP deaminase.